The sequence spans 354 residues: Methylthioribose-1-phosphate isomerase (354 aa).

Residues 58–60 (RGA), R101, and Q204 each bind substrate. D245 acts as the Proton donor in catalysis. Substrate is bound at residue 255–256 (NK).

The protein belongs to the eIF-2B alpha/beta/delta subunits family. MtnA subfamily.

It carries out the reaction 5-(methylsulfanyl)-alpha-D-ribose 1-phosphate = 5-(methylsulfanyl)-D-ribulose 1-phosphate. The protein operates within amino-acid biosynthesis; L-methionine biosynthesis via salvage pathway; L-methionine from S-methyl-5-thio-alpha-D-ribose 1-phosphate: step 1/6. Functionally, catalyzes the interconversion of methylthioribose-1-phosphate (MTR-1-P) into methylthioribulose-1-phosphate (MTRu-1-P). This is Methylthioribose-1-phosphate isomerase from Xylella fastidiosa (strain M23).